The following is a 395-amino-acid chain: Ketoisovalerate oxidoreductase subunit VorA (395 aa).

As to quaternary structure, heterotetramer of one alpha, one beta, one delta and one gamma chain.

It catalyses the reaction 3-methyl-2-oxobutanoate + 2 oxidized [2Fe-2S]-[ferredoxin] + CoA = 2-methylpropanoyl-CoA + 2 reduced [2Fe-2S]-[ferredoxin] + CO2 + H(+). The polypeptide is Ketoisovalerate oxidoreductase subunit VorA (vorA) (Pyrococcus abyssi (strain GE5 / Orsay)).